A 306-amino-acid chain; its full sequence is Agmatinase (306 aa).

6 residues coordinate Mn(2+): His126, Asp149, His151, Asp153, Asp230, and Asp232.

Belongs to the arginase family. Agmatinase subfamily. Mn(2+) serves as cofactor.

It catalyses the reaction agmatine + H2O = urea + putrescine. It participates in amine and polyamine biosynthesis; putrescine biosynthesis via agmatine pathway; putrescine from agmatine: step 1/1. In terms of biological role, catalyzes the formation of putrescine from agmatine. The polypeptide is Agmatinase (Shigella sonnei (strain Ss046)).